Here is a 748-residue protein sequence, read N- to C-terminus: LPS-assembly protein LptD (748 aa).

The first 19 residues, 1 to 19 (MSKTWGILMLSVLSAPSLA), serve as a signal peptide directing secretion.

It belongs to the LptD family. Component of the lipopolysaccharide transport and assembly complex. Interacts with LptE and LptA.

It is found in the cell outer membrane. Together with LptE, is involved in the assembly of lipopolysaccharide (LPS) at the surface of the outer membrane. This is LPS-assembly protein LptD from Pseudoalteromonas translucida (strain TAC 125).